Reading from the N-terminus, the 332-residue chain is Zinc finger protein CONSTANS-LIKE 13 (332 aa).

Zn(2+) contacts are provided by C13, C16, C36, H41, C56, C59, C79, and H84. Residues C13–L55 form a B box-type 1; atypical zinc finger. A B box-type 2; atypical zinc finger spans residues C56–F96. Residues R287–A329 form the CCT domain.

The protein belongs to the CONSTANS family.

Its subcellular location is the nucleus. This chain is Zinc finger protein CONSTANS-LIKE 13 (COL13), found in Arabidopsis thaliana (Mouse-ear cress).